The following is a 322-amino-acid chain: Helix-loop-helix 34 (322 aa).

Over residues 1–11 (METNLSEEKQK) the composition is skewed to basic and acidic residues. The disordered stretch occupies residues 1–23 (METNLSEEKQKPSKSQAQQRRQM). The region spanning 8-62 (EKQKPSKSQAQQRRQMENYEFSQLANELPLARAISGQHIDKTTMVRLATAYIKLH) is the bHLH domain. PAS domains lie at 82–152 (DSLW…DLNW) and 203–276 (PTPV…FNLG).

As to quaternary structure, efficient DNA binding requires dimerization with another bHLH protein. As to expression, expressed in a small subset of neurons, probably AVJL and AVJR. Expressed in the AVH neurons.

It is found in the nucleus. In terms of biological role, transcription factor. Involved in specifying AVH neuron identity, acting in concert with unc-42. Involved in serotonin-mediated feeding behavior, probably acting by modulating expression of genes involved in glutamate signaling. The chain is Helix-loop-helix 34 (hlh-34) from Caenorhabditis elegans.